A 645-amino-acid polypeptide reads, in one-letter code: uncharacterized protein (645 aa).

Positions Met-1 to Ser-23 are cleaved as a signal peptide. Disordered regions lie at residues Ile-30–Ser-58 and Asn-92–Pro-129. Residues Asn-92 to Thr-102 are compositionally biased toward polar residues. Asn-107 carries an N-linked (GlcNAc...) asparagine glycan. The span at Asn-107 to Asp-119 shows a compositional bias: basic and acidic residues. Positions Cys-135–Asp-214 constitute a PAN 1 domain. 2 disulfides stabilise this stretch: Cys-161–Cys-187 and Cys-165–Cys-175. The interval Glu-225–Pro-247 is disordered. PAN domains follow at residues Cys-281–Cys-369 and Cys-378–Cys-465. Disulfide bonds link Cys-281/Cys-369, Cys-313/Cys-341, Cys-317/Cys-329, Cys-378/Cys-465, Cys-407/Cys-436, and Cys-411/Cys-422. Asn-421 carries N-linked (GlcNAc...) asparagine glycosylation. Over residues Ala-556–Ile-567 the composition is skewed to basic and acidic residues. Residues Ala-556–Lys-582 are disordered. Residue Asn-570 is glycosylated (N-linked (GlcNAc...) asparagine).

This is an uncharacterized protein from Caenorhabditis elegans.